Reading from the N-terminus, the 331-residue chain is POU domain, class 4, transcription factor 3 (331 aa).

Low complexity predominate over residues 81-97; the sequence is TSSSSTVPISHPSSNLP. The tract at residues 81-108 is disordered; sequence TSSSSTVPISHPSSNLPSHHHHHLSHQT. Residues 172 to 249 form the POU-specific domain; that stretch reads DVESDPRELE…VLQAWLEEAE (78 aa). A DNA-binding region (homeobox) is located at residues 267–326; it reads RKRKRTSIAAPEKRSLEAYFAIQPRPSSEKIAAIAEKLDLKKNVVRVWFCNQRQKQKRMK.

The protein belongs to the POU transcription factor family. Class-4 subfamily. Interaction with ISL1. As to expression, expressed in the nervous system. Expressed in the otic vesicle during embryogenesis. Expressed in the adult retina in a subset of retinal ganglion cells (RGCs), and at a lower level in the adult tectum. Not expressed in the adult olfactory bulb.

The protein localises to the nucleus. It is found in the cytoplasm. Functionally, acts as a transcriptional activator. Acts by binding to sequences related to the consensus octamer motif 5'-ATGCAAAT-3' in the regulatory regions of its target genes. May play a role in specifying terminally differentiated neuronal phenotypes. The sequence is that of POU domain, class 4, transcription factor 3 (pou4f3) from Danio rerio (Zebrafish).